The primary structure comprises 352 residues: Molybdenum import ATP-binding protein ModC (352 aa).

Positions 1–229 constitute an ABC transporter domain; the sequence is MLELNFSQTL…SVMNPWLPKE (229 aa). Position 31–38 (31–38) interacts with ATP; it reads GVSGAGKT. In terms of domain architecture, Mop spans 289–352; it reads QTSIRNVLRA…AQIKSVSITA (64 aa).

This sequence belongs to the ABC transporter superfamily. Molybdate importer (TC 3.A.1.8) family. The complex is composed of two ATP-binding proteins (ModC), two transmembrane proteins (ModB) and a solute-binding protein (ModA).

Its subcellular location is the cell inner membrane. The catalysed reaction is molybdate(out) + ATP + H2O = molybdate(in) + ADP + phosphate + H(+). In terms of biological role, part of the ABC transporter complex ModABC involved in molybdenum import. Responsible for energy coupling to the transport system. This chain is Molybdenum import ATP-binding protein ModC, found in Escherichia coli (strain K12).